A 752-amino-acid chain; its full sequence is BCLAF1 and THRAP3 family member 3 (752 aa).

The span at 1-13 shows a compositional bias: basic residues; the sequence is MARSRSRSPRWKQ. 3 disordered regions span residues 1-114, 132-177, and 190-252; these read MARS…YMPT, PTVQ…QMSL, and DELR…DPAR. Phosphoserine is present on residues Ser15 and Ser17. The segment covering 23-57 has biased composition (basic and acidic residues); the sequence is FEYHEERHFHGHYDPEYRHDQQRPFTWRMDDEKHG. Phosphoserine occurs at positions 78 and 80. Basic and acidic residues predominate over residues 85–109; it reads PVEKFDTYKPHQEYFPGRGDDDRRS. Residues 190–199 are compositionally biased toward basic and acidic residues; sequence DELRHQRVQE. Ser205 bears the Phosphoserine mark. 2 stretches are compositionally biased toward basic and acidic residues: residues 222–231 and 238–252; these read RYPEDHDFRK and RPTD…DPAR. Lys416 participates in a covalent cross-link: Glycyl lysine isopeptide (Lys-Gly) (interchain with G-Cter in SUMO2). Residue Ser592 is modified to Phosphoserine.

Belongs to the BCLAF1/THRAP3 family.

It localises to the mitochondrion. The polypeptide is BCLAF1 and THRAP3 family member 3 (Mus musculus (Mouse)).